Reading from the N-terminus, the 211-residue chain is N-(5'-phosphoribosyl)anthranilate isomerase (211 aa).

It belongs to the TrpF family.

The enzyme catalyses N-(5-phospho-beta-D-ribosyl)anthranilate = 1-(2-carboxyphenylamino)-1-deoxy-D-ribulose 5-phosphate. Its pathway is amino-acid biosynthesis; L-tryptophan biosynthesis; L-tryptophan from chorismate: step 3/5. The sequence is that of N-(5'-phosphoribosyl)anthranilate isomerase from Zymomonas mobilis subsp. mobilis (strain ATCC 31821 / ZM4 / CP4).